The following is a 571-amino-acid chain: Asparagine--tRNA ligase, cytoplasmic 3 (571 aa).

At Gly2 the chain carries N-acetylglycine. The segment at residues 50–128 (VRIGGWVKTG…QSIELSVETV (79 aa)) is a DNA-binding region (OB). The 57-residue stretch at 233–289 (DVEAARLIVKERGEAVAQLKVAKASKEEITASVAQLSVAKASLAHVEERLRLKPGLP) folds into the WHEP-TRS domain.

The protein belongs to the class-II aminoacyl-tRNA synthetase family.

The protein resides in the cytoplasm. Its subcellular location is the cytosol. The enzyme catalyses tRNA(Asn) + L-asparagine + ATP = L-asparaginyl-tRNA(Asn) + AMP + diphosphate + H(+). This is Asparagine--tRNA ligase, cytoplasmic 3 from Arabidopsis thaliana (Mouse-ear cress).